The chain runs to 585 residues: Pyruvate kinase (585 aa).

Arg-32 provides a ligand contact to substrate. K(+) contacts are provided by Asn-34, Ser-36, Asp-66, and Thr-67. Position 34–37 (34–37) interacts with ATP; it reads NFSH. ATP-binding residues include Arg-73 and Lys-156. Glu-221 lines the Mg(2+) pocket. Substrate-binding residues include Gly-244, Asp-245, and Thr-277. Mg(2+) is bound at residue Asp-245.

The protein belongs to the pyruvate kinase family. This sequence in the C-terminal section; belongs to the PEP-utilizing enzyme family. It depends on Mg(2+) as a cofactor. K(+) serves as cofactor.

It carries out the reaction pyruvate + ATP = phosphoenolpyruvate + ADP + H(+). It participates in carbohydrate degradation; glycolysis; pyruvate from D-glyceraldehyde 3-phosphate: step 5/5. This chain is Pyruvate kinase (pyk), found in Staphylococcus aureus (strain bovine RF122 / ET3-1).